The primary structure comprises 602 residues: MATPCIQNAFRRKTLPVRIGDLFVGSEHSIKIQSMTTTATTDVDGTVRQICALQEWGCDIVRVTVQGLREVHACEHIKDRLIQQNISIPLVADIHFFPQAAIHVVDCVDKVRINPGNYVDKRNMFTGKIYSDEQYAHSLEHLMNKFSPLVEKCKRLGKAMRIGVNHGSLSERVTQRYGNTIEGMVYSALEYAEVCVAMDYHDVIFSMKSSNPKVMVAAYRSLAYELDQREWSYPLHLGVTEAGSGTAGIVKSAVGIGTLLSEGLGDTIRCSLTGSPINEIPICIDLLKQTTELSERWGEADNPFAIHSSKQLGTRNTLNTPPWGNVYGLLINLTDVQLLTAEPIELLQCLGIDTTTGKIDPTTPEGVVVPKAMRSSPIVSEIEKHLLVFNKEDAPILNPMNEEEWLSEETLSAPFVYFEVTDIHTARRFFSLRQHSTQPVCLSFSLDPHLSKNEAIIDLSARLGALLLDGLGSCVLLDFVDIKLSRTLGFLILQSANIRSVTVEYVSCPGCGRTLFDLLAVSQRIRERTKHLPGGLKIAVMGCIVNGPGEMADADFGYVGSKPGMIDLYVKHKCVKSCIPIENAEEELVQLLKEHGVWKEPE.

4 residues coordinate [4Fe-4S] cluster: cysteine 508, cysteine 511, cysteine 543, and glutamate 550.

The protein belongs to the IspG family. Requires [4Fe-4S] cluster as cofactor.

It carries out the reaction (2E)-4-hydroxy-3-methylbut-2-enyl diphosphate + oxidized [flavodoxin] + H2O + 2 H(+) = 2-C-methyl-D-erythritol 2,4-cyclic diphosphate + reduced [flavodoxin]. It functions in the pathway isoprenoid biosynthesis; isopentenyl diphosphate biosynthesis via DXP pathway; isopentenyl diphosphate from 1-deoxy-D-xylulose 5-phosphate: step 5/6. In terms of biological role, converts 2C-methyl-D-erythritol 2,4-cyclodiphosphate (ME-2,4cPP) into 1-hydroxy-2-methyl-2-(E)-butenyl 4-diphosphate. The chain is 4-hydroxy-3-methylbut-2-en-1-yl diphosphate synthase (flavodoxin) from Chlamydia trachomatis serovar L2b (strain UCH-1/proctitis).